Here is a 1881-residue protein sequence, read N- to C-terminus: Kinesin-like protein KIF26A (1881 aa).

3 disordered regions span residues 20–66, 145–193, and 309–330; these read PARE…AGGG, PASH…PPGP, and ASKR…STYP. Position 30 is a phosphoserine (Ser-30). In terms of domain architecture, Kinesin motor spans 364-718; it reads KVKVMLRIWP…VQLAARIHRL (355 aa). 462–469 lines the ATP pocket; sequence GHMSLGKS. 8 disordered regions span residues 718–778, 794–827, 846–982, 1078–1104, 1118–1266, 1328–1425, 1442–1633, and 1652–1698; these read LRRK…SSEQ, SDRE…RDAD, GSEA…QAAL, YTSQ…GSPA, LSES…PRLP, SGSL…PYRP, SKVR…SGEL, and YESM…TGLQ. Residues 742–751 show a composition bias toward basic residues; that stretch reads RRPPHLRPFH. The segment covering 818-827 has biased composition (basic and acidic residues); sequence RPSEGPRDAD. Over residues 905-915 the composition is skewed to polar residues; the sequence is SDPSKTGTQSE. Over residues 940 to 950 the composition is skewed to pro residues; sequence LPSPAPPPPRQ. Residues 1084 to 1095 show a composition bias toward low complexity; sequence EGPGDPGEFPEG. Residues 1151–1162 are compositionally biased toward basic and acidic residues; that stretch reads EESKVRSSECGR. Ser-1257 carries the phosphoserine modification. A compositionally biased stretch (low complexity) spans 1328 to 1353; it reads SGSLKTTSGSKKSVSPKGAFFPRPSG. Residues 1366-1378 are compositionally biased toward polar residues; the sequence is LEQSTALTPTQAL. Residues 1390-1399 show a composition bias toward basic and acidic residues; sequence RGEEEARPSG. Positions 1400 to 1412 are enriched in polar residues; sequence RSDSSVPKATSSL. Composition is skewed to low complexity over residues 1477 to 1489, 1524 to 1537, and 1575 to 1587; these read PAKG…PPAG, PGPR…PGIG, and WGST…NDSG. The segment covering 1616–1629 has biased composition (polar residues); that stretch reads RYSSGHGSDNSSVL. A Phosphoserine modification is found at Ser-1654. Residues 1664-1675 are compositionally biased toward low complexity; it reads SASSAPDSMSES. Positions 1685–1698 are enriched in basic residues; sequence RSLKSPKKRATGLQ. The stretch at 1780 to 1812 forms a coiled coil; that stretch reads LRLAERRQQRLQEVQAKRDHLCEELAETQGRLM.

This sequence belongs to the TRAFAC class myosin-kinesin ATPase superfamily. Kinesin family. KIF26 subfamily. Interacts with GRB2 (via SH2 domain). As to expression, expressed in several neuronal populations.

It is found in the cytoplasm. Its subcellular location is the cytoskeleton. Functionally, atypical kinesin that plays a key role in enteric neuron development. Acts by repressing a cell growth signaling pathway in the enteric nervous system development, possibly via its interaction with GRB2 that prevents GRB2-binding to SHC, thereby attenating the GDNF-Ret signaling. Binds to microtubules but lacks microtubule-based motility due to the absence of ATPase activity. Plays a critical role in cerebral cortical development. It probably acts as a microtubule stabilizer that regulates neurite growth and radial migration of cortical excitatory neurons. The polypeptide is Kinesin-like protein KIF26A (Kif26a) (Mus musculus (Mouse)).